Consider the following 281-residue polypeptide: 4-deoxy-L-threo-5-hexosulose-uronate ketol-isomerase (281 aa).

4 residues coordinate Zn(2+): H198, H200, E205, and H248.

Belongs to the KduI family. Zn(2+) is required as a cofactor.

It carries out the reaction 5-dehydro-4-deoxy-D-glucuronate = 3-deoxy-D-glycero-2,5-hexodiulosonate. It functions in the pathway glycan metabolism; pectin degradation; 2-dehydro-3-deoxy-D-gluconate from pectin: step 4/5. Its function is as follows. Catalyzes the isomerization of 5-dehydro-4-deoxy-D-glucuronate to 3-deoxy-D-glycero-2,5-hexodiulosonate. This is 4-deoxy-L-threo-5-hexosulose-uronate ketol-isomerase from Levilactobacillus brevis (strain ATCC 367 / BCRC 12310 / CIP 105137 / JCM 1170 / LMG 11437 / NCIMB 947 / NCTC 947) (Lactobacillus brevis).